Consider the following 524-residue polypeptide: Peptide chain release factor 3 (524 aa).

One can recognise a tr-type G domain in the interval Asn-8 to Glu-276. GTP is bound by residues Ser-17 to Thr-24, Asp-85 to His-89, and Asn-139 to Asp-142.

This sequence belongs to the TRAFAC class translation factor GTPase superfamily. Classic translation factor GTPase family. PrfC subfamily.

Its subcellular location is the cytoplasm. Its function is as follows. Increases the formation of ribosomal termination complexes and stimulates activities of RF-1 and RF-2. It binds guanine nucleotides and has strong preference for UGA stop codons. It may interact directly with the ribosome. The stimulation of RF-1 and RF-2 is significantly reduced by GTP and GDP, but not by GMP. The polypeptide is Peptide chain release factor 3 (Hydrogenovibrio crunogenus (strain DSM 25203 / XCL-2) (Thiomicrospira crunogena)).